The primary structure comprises 351 residues: tRNA N6-adenosine threonylcarbamoyltransferase (351 aa).

Residues histidine 124 and histidine 128 each coordinate Fe cation. Substrate contacts are provided by residues 146-150 (LVSGG), aspartate 180, glycine 193, aspartate 197, and asparagine 285. Residue aspartate 313 coordinates Fe cation.

This sequence belongs to the KAE1 / TsaD family. The cofactor is Fe(2+).

Its subcellular location is the cytoplasm. It carries out the reaction L-threonylcarbamoyladenylate + adenosine(37) in tRNA = N(6)-L-threonylcarbamoyladenosine(37) in tRNA + AMP + H(+). In terms of biological role, required for the formation of a threonylcarbamoyl group on adenosine at position 37 (t(6)A37) in tRNAs that read codons beginning with adenine. Is involved in the transfer of the threonylcarbamoyl moiety of threonylcarbamoyl-AMP (TC-AMP) to the N6 group of A37, together with TsaE and TsaB. TsaD likely plays a direct catalytic role in this reaction. The protein is tRNA N6-adenosine threonylcarbamoyltransferase of Mycobacterium leprae (strain TN).